The following is a 697-amino-acid chain: Disintegrin and metalloproteinase domain-containing protein 26A (697 aa).

The N-terminal stretch at 1–22 (MFLKFCLWTMFFFSAWSPIGHA) is a signal peptide. The propeptide occupies 23-187 (KYSSLLEVVT…NAPTLLQIPY (165 aa)). N127 is a glycosylation site (N-linked (GlcNAc...) asparagine). A Cysteine switch motif is present at residues 159–166 (MRCGLSEE). Position 161 (C161) interacts with Zn(2+). Residues 188–671 (ENWWTHHRFI…PPLPLSHSKW (484 aa)) are Extracellular-facing. Positions 195–385 (RFIEYFVVLD…TKRSCLYDIP (191 aa)) constitute a Peptidase M12B domain. N214 carries an N-linked (GlcNAc...) asparagine glycan. Disulfide bonds link C305–C380, C344–C366, and C346–C351. Position 329 (H329) interacts with Zn(2+). E330 is a catalytic residue. Zn(2+) contacts are provided by H333 and H339. N-linked (GlcNAc...) asparagine glycans are attached at residues N365, N391, N464, N506, N531, and N573. The Disintegrin domain occupies 392 to 478 (LTVCGNKVVE…ECPGDVYKAD (87 aa)). C450 and C470 form a disulfide bridge. The 34-residue stretch at 616-649 (LVSNCSPQLYHMQGICNNKQHCHCGVTWKPPDCQ) folds into the EGF-like domain. 2 disulfides stabilise this stretch: C620–C631 and C639–C648. A helical transmembrane segment spans residues 672 to 692 (IVYILIVLDVCIVIIIYLFSF). At 693–697 (YKLSK) the chain is on the cytoplasmic side.

Zn(2+) serves as cofactor. In terms of tissue distribution, expressed in sperm (at protein level). Expressed specifically in testis.

It is found in the membrane. Its function is as follows. Sperm surface membrane protein that may be involved in spermatogenesis and fertilization. This chain is Disintegrin and metalloproteinase domain-containing protein 26A, found in Mus musculus (Mouse).